The primary structure comprises 397 residues: Phosphoglycerate kinase (397 aa).

Residues 22-24 (DLN), Arg-37, 60-63 (HFGR), Arg-119, and Arg-152 each bind substrate. ATP contacts are provided by residues Lys-202, Glu-324, and 354–357 (GGDT).

It belongs to the phosphoglycerate kinase family. In terms of assembly, monomer.

The protein localises to the cytoplasm. It carries out the reaction (2R)-3-phosphoglycerate + ATP = (2R)-3-phospho-glyceroyl phosphate + ADP. It functions in the pathway carbohydrate degradation; glycolysis; pyruvate from D-glyceraldehyde 3-phosphate: step 2/5. This chain is Phosphoglycerate kinase, found in Rhizorhabdus wittichii (strain DSM 6014 / CCUG 31198 / JCM 15750 / NBRC 105917 / EY 4224 / RW1) (Sphingomonas wittichii).